The primary structure comprises 152 residues: Endoribonuclease YbeY (152 aa).

Zn(2+)-binding residues include His118, His122, and His128.

Belongs to the endoribonuclease YbeY family. The cofactor is Zn(2+).

The protein resides in the cytoplasm. Single strand-specific metallo-endoribonuclease involved in late-stage 70S ribosome quality control and in maturation of the 3' terminus of the 16S rRNA. This Lacticaseibacillus paracasei (strain ATCC 334 / BCRC 17002 / CCUG 31169 / CIP 107868 / KCTC 3260 / NRRL B-441) (Lactobacillus paracasei) protein is Endoribonuclease YbeY.